An 879-amino-acid polypeptide reads, in one-letter code: Alanine--tRNA ligase (879 aa).

Positions 566, 570, 668, and 672 each coordinate Zn(2+).

It belongs to the class-II aminoacyl-tRNA synthetase family. Zn(2+) serves as cofactor.

Its subcellular location is the cytoplasm. It catalyses the reaction tRNA(Ala) + L-alanine + ATP = L-alanyl-tRNA(Ala) + AMP + diphosphate. Its function is as follows. Catalyzes the attachment of alanine to tRNA(Ala) in a two-step reaction: alanine is first activated by ATP to form Ala-AMP and then transferred to the acceptor end of tRNA(Ala). Also edits incorrectly charged Ser-tRNA(Ala) and Gly-tRNA(Ala) via its editing domain. The polypeptide is Alanine--tRNA ligase (Clostridium botulinum (strain Hall / ATCC 3502 / NCTC 13319 / Type A)).